The primary structure comprises 297 residues: MIPLSVRVPASTANVGPGFDSVGIALSLYLDVVVKEKADKWQVIHSFEESIPTDDKNLIVSTACKVCPSISPHIIEVTSNIPLTRGLGSSASAIVAGIELANQLGNLNLTADQKVQIATNFEGHPDNVAASILGGTVIGALDGKDISVVRIESKELGVISLIPNEELNTDESRSVLPKMFPFHEAVKASAISNVLVAALCQKRWEVVGEMMERDHFHEPYRLELVPLLPSIRKCAKEFGAYGTALSGAGPSIFILTPYEKRQEIAEQLARVFTDMKVCELEIDHKGIIVNKEEHIGS.

Residue 82–92 (PLTRGLGSSAS) participates in ATP binding.

It belongs to the GHMP kinase family. Homoserine kinase subfamily.

It is found in the cytoplasm. The catalysed reaction is L-homoserine + ATP = O-phospho-L-homoserine + ADP + H(+). Its pathway is amino-acid biosynthesis; L-threonine biosynthesis; L-threonine from L-aspartate: step 4/5. Its function is as follows. Catalyzes the ATP-dependent phosphorylation of L-homoserine to L-homoserine phosphate. This is Homoserine kinase from Bacillus cereus (strain ATCC 14579 / DSM 31 / CCUG 7414 / JCM 2152 / NBRC 15305 / NCIMB 9373 / NCTC 2599 / NRRL B-3711).